A 776-amino-acid chain; its full sequence is Serine/threonine-protein kinase SIK1 (776 aa).

Positions 27-278 (YDVERTLGKG…IAQIRQHRWM (252 aa)) constitute a Protein kinase domain. Residues 33-41 (LGKGNFAVV) and Lys56 contribute to the ATP site. The Proton acceptor role is filled by Asp149. Thr182 bears the Phosphothreonine; by LKB1 and GSK3-beta mark. Ser186 carries the phosphoserine; by autocatalysis modification. Positions 303–343 (DYNEQVLGIMQALGIDRQRTVESLQNSSYNHFAAIYYLLLE) constitute a UBA domain. Residue Thr322 is modified to Phosphothreonine; by CaMK1. Disordered stretches follow at residues 350 to 371 (STQP…RNSD) and 449 to 472 (EARQ…STGR). Residue Ser577 is modified to Phosphoserine; by PKA. Residues 586–612 (KAFRQQLRKNARTKGFLGLNKIKGLAR) form an RK-rich region region. Positions 621-643 (GSRGGMSTFHTPAPSSGLQGCTA) are disordered. A compositionally biased stretch (polar residues) spans 628–643 (TFHTPAPSSGLQGCTA).

Belongs to the protein kinase superfamily. CAMK Ser/Thr protein kinase family. AMPK subfamily. In terms of assembly, interacts (when phosphorylated on Thr-182 and Ser-186) with YWHAZ. Interacts with ATP1A1. Mg(2+) is required as a cofactor. In terms of processing, phosphorylated at Thr-182 by STK11/LKB1 in complex with STE20-related adapter-alpha (STRADA) pseudo kinase and CAB39, leading to its activation. Phosphorylation at Thr-182 promotes autophosphorylation at Ser-186, which is required for sustained activity. Autophosphorylation at Ser-186 is maintained by sequential phosphorylation at Thr-182 by GSK3-beta. GSK3-beta cannot initiate phosphorylation at Thr-182, it can only maintain it. Phosphorylation at Ser-577 by PKA promotes translocation to the cytoplasm. Phosphorylation at Thr-322 by CaMK1 following intracellular sodium concentration leads to activation.

The protein resides in the cytoplasm. Its subcellular location is the nucleus. It carries out the reaction L-seryl-[protein] + ATP = O-phospho-L-seryl-[protein] + ADP + H(+). The enzyme catalyses L-threonyl-[protein] + ATP = O-phospho-L-threonyl-[protein] + ADP + H(+). With respect to regulation, activated by phosphorylation on Thr-182. Also activated by phosphorylation on Thr-322 in response to increases in intracellular sodium in parallel with elevations in intracellular calcium through the reversible sodium/calcium exchanger. Serine/threonine-protein kinase involved in various processes such as cell cycle regulation, gluconeogenesis and lipogenesis regulation, muscle growth and differentiation and tumor suppression. Phosphorylates HDAC4, HDAC5, PPME1, SREBF1, CRTC1/TORC1 and CRTC2/TORC2. Acts as a tumor suppressor and plays a key role in p53/TP53-dependent anoikis, a type of apoptosis triggered by cell detachment: required for phosphorylation of p53/TP53 in response to loss of adhesion and is able to suppress metastasis. Part of a sodium-sensing signaling network, probably by mediating phosphorylation of PPME1: following increases in intracellular sodium, SIK1 is activated by CaMK1 and phosphorylates PPME1 subunit of protein phosphatase 2A (PP2A), leading to dephosphorylation of sodium/potassium-transporting ATPase ATP1A1 and subsequent increase activity of ATP1A1. Acts as a regulator of muscle cells by phosphorylating and inhibiting class II histone deacetylases HDAC4 and HDAC5, leading to promote expression of MEF2 target genes in myocytes. Also required during cardiomyogenesis by regulating the exit of cardiomyoblasts from the cell cycle via down-regulation of CDKN1C/p57Kip2. Acts as a regulator of hepatic gluconeogenesis by phosphorylating and repressing the CREB-specific coactivators CRTC1/TORC1 and CRTC2/TORC2, leading to inhibit CREB activity. Also regulates hepatic lipogenesis by phosphorylating and inhibiting SREBF1. In concert with CRTC1/TORC1, regulates the light-induced entrainment of the circadian clock by attenuating PER1 induction; represses CREB-mediated transcription of PER1 by phosphorylating and deactivating CRTC1/TORC1. In Rattus norvegicus (Rat), this protein is Serine/threonine-protein kinase SIK1 (Sik1).